Consider the following 213-residue polypeptide: Orotate phosphoribosyltransferase (213 aa).

Lys26 lines the 5-phospho-alpha-D-ribose 1-diphosphate pocket. Position 34–35 (34–35 (FF)) interacts with orotate. 5-phospho-alpha-D-ribose 1-diphosphate is bound by residues 72–73 (YK), Arg99, Lys100, Lys103, His105, and 124–132 (DDVITAGTA). Orotate contacts are provided by Thr128 and Arg156.

It belongs to the purine/pyrimidine phosphoribosyltransferase family. PyrE subfamily. In terms of assembly, homodimer. The cofactor is Mg(2+).

The enzyme catalyses orotidine 5'-phosphate + diphosphate = orotate + 5-phospho-alpha-D-ribose 1-diphosphate. The protein operates within pyrimidine metabolism; UMP biosynthesis via de novo pathway; UMP from orotate: step 1/2. Catalyzes the transfer of a ribosyl phosphate group from 5-phosphoribose 1-diphosphate to orotate, leading to the formation of orotidine monophosphate (OMP). The chain is Orotate phosphoribosyltransferase from Pseudomonas paraeruginosa (strain DSM 24068 / PA7) (Pseudomonas aeruginosa (strain PA7)).